A 238-amino-acid polypeptide reads, in one-letter code: Probable transglycosylase SceD 1 (238 aa).

Residues 1–27 form the signal peptide; that stretch reads MKKTVVASTLAVGLGVTGFAAGNSADA. Residues 87 to 97 are compositionally biased toward polar residues; the sequence is TNAPAQETAEQ. The tract at residues 87–161 is disordered; sequence TNAPAQETAE…SEASEGSSVN (75 aa). The segment covering 102 to 156 has biased composition (low complexity); that stretch reads EQPQQTEQASTEQPAQEAAPQTEETQQPQQEATTQTTSSSNESTSNESSSSEASE.

This sequence belongs to the transglycosylase family. SceD subfamily.

The protein resides in the secreted. Is able to cleave peptidoglycan and affects clumping and separation of bacterial cells. The chain is Probable transglycosylase SceD 1 (sceD1) from Staphylococcus saprophyticus subsp. saprophyticus (strain ATCC 15305 / DSM 20229 / NCIMB 8711 / NCTC 7292 / S-41).